Consider the following 644-residue polypeptide: G-protein coupled receptor-associated protein LMBRD2 (644 aa).

At 1–4 the chain is on the extracellular side; it reads MGTV. Residues 5-27 form a helical membrane-spanning segment; sequence SLAVQLFIVFLLTSYLLNKYSTI. At 28-31 the chain is on the cytoplasmic side; sequence RKQN. A helical transmembrane segment spans residues 32–52; that stretch reads PIVTISTFIGWYFSLIIVFVL. Residues 53 to 102 lie on the Extracellular side of the membrane; sequence PLDVAITFFHKCENDRQRVLNTTSTPAPIVPECELPGGYVPDDVLFDLWR. Asn73 carries an N-linked (GlcNAc...) asparagine glycan. The chain crosses the membrane as a helical span at residues 103–123; it reads VVYWSAQILTWLILPLLQSYV. The Cytoplasmic portion of the chain corresponds to 124 to 145; sequence TAGNFTIFGKIRAAVINNTVYY. A helical transmembrane segment spans residues 146–166; the sequence is AIYSLCFLAILIYAMFKGVSI. Over 167–172 the chain is Extracellular; that stretch reads NIENLK. A helical transmembrane segment spans residues 173-193; the sequence is VILVSASNTWGLFLLVVLLGH. Residues 194-369 lie on the Cytoplasmic side of the membrane; the sequence is GLVELPRSLW…RLQTPFCRVL (176 aa). Residues 216 to 245 adopt a coiled-coil conformation; the sequence is YFDIEKLASEKSEAEENVKEIYKKVRVLFN. The chain crosses the membrane as a helical span at residues 370-390; sequence GVVTVFMTFFVLFSECTFFVV. At 391-412 the chain is on the extracellular side; that stretch reads SYTVSPAAFVTEYASNRFHYKY. Residues 413 to 433 form a helical membrane-spanning segment; sequence TQFVAFGIIVYLITCAYFTIF. Over 434 to 453 the chain is Cytoplasmic; it reads RLQIYKYYHLDPNGHTDENS. A helical membrane pass occupies residues 454-474; that stretch reads ILFSAILLCRLTPPICLNFLG. The Extracellular portion of the chain corresponds to 475 to 502; the sequence is MIHMDSHVSMAKSFGVETQFTKLMGHLD. A helical membrane pass occupies residues 503–523; sequence VIPILAKGINIYLPICIILLC. Topologically, residues 524-644 are cytoplasmic; that stretch reads AIHYYRVGAY…PSSSGFFDDM (121 aa). The span at 567–576 shows a compositional bias: basic and acidic residues; sequence SIKRSNERNQ. The tract at residues 567–644 is disordered; that stretch reads SIKRSNERNQ…PSSSGFFDDM (78 aa). Residues 578–594 are compositionally biased toward low complexity; that stretch reads NQSWTNTITSNTSTTSN. Polar residues predominate over residues 621-644; it reads VSSTTRISLSPTEHPSSSGFFDDM.

Belongs to the LIMR family.

Its subcellular location is the cell membrane. May associate with G-protein coupled receptors and regulate downstream signaling pathways. The sequence is that of G-protein coupled receptor-associated protein LMBRD2 from Caenorhabditis briggsae.